The chain runs to 209 residues: Phosphoheptose isomerase (209 aa).

Residues 50-209 (IAETFRNGGK…ELVESMMGYA (160 aa)) enclose the SIS domain. A substrate-binding site is contributed by 65 to 67 (NGG). 2 residues coordinate Zn(2+): His74 and Glu78. Residues Glu78, 109–110 (ND), 135–137 (STS), Ser140, and Gln188 each bind substrate. Residues Gln188 and His196 each contribute to the Zn(2+) site.

The protein belongs to the SIS family. GmhA subfamily. Zn(2+) is required as a cofactor.

It is found in the cytoplasm. The enzyme catalyses 2 D-sedoheptulose 7-phosphate = D-glycero-alpha-D-manno-heptose 7-phosphate + D-glycero-beta-D-manno-heptose 7-phosphate. It participates in carbohydrate biosynthesis; D-glycero-D-manno-heptose 7-phosphate biosynthesis; D-glycero-alpha-D-manno-heptose 7-phosphate and D-glycero-beta-D-manno-heptose 7-phosphate from sedoheptulose 7-phosphate: step 1/1. Its function is as follows. Catalyzes the isomerization of sedoheptulose 7-phosphate in D-glycero-D-manno-heptose 7-phosphate. The polypeptide is Phosphoheptose isomerase (Chlorobaculum parvum (strain DSM 263 / NCIMB 8327) (Chlorobium vibrioforme subsp. thiosulfatophilum)).